The primary structure comprises 59 residues: DNA gyrase inhibitor YacG (59 aa).

Zn(2+) is bound by residues C9, C12, C27, and C31.

Belongs to the DNA gyrase inhibitor YacG family. In terms of assembly, interacts with GyrB. It depends on Zn(2+) as a cofactor.

Functionally, inhibits all the catalytic activities of DNA gyrase by preventing its interaction with DNA. Acts by binding directly to the C-terminal domain of GyrB, which probably disrupts DNA binding by the gyrase. The chain is DNA gyrase inhibitor YacG from Geotalea daltonii (strain DSM 22248 / JCM 15807 / FRC-32) (Geobacter daltonii).